Reading from the N-terminus, the 521-residue chain is Occludin (521 aa).

Residues 1–66 are Cytoplasmic-facing; it reads MSSRPFESPP…KWTSPPGVIR (66 aa). One can recognise an MARVEL domain in the interval 60–268; that stretch reads SPPGVIRILS…IIFFAVKTRR (209 aa). A helical transmembrane segment spans residues 67–89; it reads ILSMLVIVMCIAIFGCVASTLAW. At 90 to 134 the chain is on the extracellular side; the sequence is DRGYGTGLMGGSIGYPYGSGFGSYGTGYGYGFGYGYGYGGYTDPR. A helical membrane pass occupies residues 135-159; sequence AAKGFLLAMVAFCFIAALVIFVTSV. Over 160-169 the chain is Cytoplasmic; that stretch reads IRSDISRTRR. The chain crosses the membrane as a helical span at residues 170–194; that stretch reads YYLTVIILSAFLGVMMFIATIVYIM. The Extracellular portion of the chain corresponds to 195–242; it reads GVNPTAQASGSLYSSQIYAMCNQFYASTATGLYMDQYLYHYCVVDPQE. C215 and C236 are oxidised to a cystine. A helical membrane pass occupies residues 243–264; sequence AIAIVLGFMVIVAFALIIFFAV. The Cytoplasmic portion of the chain corresponds to 265 to 521; the sequence is KTRRKMDRYD…MVGDYDRQKT (257 aa). S301 bears the Phosphoserine mark. Residues 301-407 form a disordered region; sequence SAGTQDMPPP…ETDYTTGGES (107 aa). T304 is modified (phosphothreonine). A phosphoserine mark is found at S312, S320, and S339. Residue Y367 is modified to Phosphotyrosine. Phosphoserine is present on residues S368 and S369. Positions 380 to 389 are enriched in basic residues; the sequence is APSKGRTGRP. Basic and acidic residues predominate over residues 390-399; the sequence is KRLEQDHYET. Y397 and Y401 each carry phosphotyrosine. Residues T402 and T403 each carry the phosphothreonine; by PKC/PRKCH modification. A Phosphoserine modification is found at S407. Residues 413–521 form the OCEL domain; that stretch reads EDWIREYPPI…MVGDYDRQKT (109 aa). The stretch at 424 to 488 forms a coiled coil; that stretch reads SDQQRQLYKR…EYNRLKQVKG (65 aa). S489 is subject to Phosphoserine.

This sequence belongs to the ELL/occludin family. In terms of assembly, interacts with TJP1/ZO1. Interacts with VAPA. Interacts with CLDN1, CLDN6, CLDN9, CLDN11, CLDN12 and CLDN17. Interacts with PLSCR1. Interacts with LSR, ILDR1 and ILDR2. Interacts with TJP2/ZO2. Post-translationally, dephosphorylated by PTPRJ. Less-phosphorylated forms are found in basolateral membrane, cytosol and tight junction. More-heavily phosphorylated forms are concentrated exclusively in tight junction. Localized at tight junctions of both epithelial and endothelial cells.

The protein localises to the cell membrane. Its subcellular location is the cell junction. It localises to the tight junction. In terms of biological role, may play a role in the formation and regulation of the tight junction (TJ) paracellular permeability barrier. Interacts with ZO-1. This is Occludin (OCLN) from Canis lupus familiaris (Dog).